Consider the following 303-residue polypeptide: Phospholipase A1 2 (303 aa).

A disulfide bond links Cys6 and Cys90. Ser140 functions as the Nucleophile in the catalytic mechanism. Asp168 acts as the Charge relay system in catalysis. Cys179 and Cys184 form a disulfide bridge. Catalysis depends on His232, which acts as the Charge relay system. Cystine bridges form between Cys247/Cys271, Cys248/Cys296, and Cys264/Cys269.

This sequence belongs to the AB hydrolase superfamily. Lipase family. In terms of tissue distribution, expressed by the venom gland.

Its subcellular location is the secreted. The enzyme catalyses a 1,2-diacyl-sn-glycero-3-phosphocholine + H2O = a 2-acyl-sn-glycero-3-phosphocholine + a fatty acid + H(+). Catalyzes the hydrolysis of phosphatidylcholine with phospholipase A1 activity. May act as an allergen and induce hemolytic activity. In Dolichovespula maculata (Bald-faced hornet), this protein is Phospholipase A1 2.